A 557-amino-acid chain; its full sequence is Eudesmanediol synthase (557 aa).

Mg(2+) is bound by residues D310 and D314. D310, D314, and R450 together coordinate substrate. Positions 310–314 (DDTFD) match the DDXXD motif motif. Positions 453 and 457 each coordinate Mg(2+).

This sequence belongs to the terpene synthase family. In terms of assembly, monomer. It depends on Mg(2+) as a cofactor. Mn(2+) serves as cofactor.

The protein localises to the cytoplasm. It catalyses the reaction (2E,6E)-farnesyl diphosphate + 2 H2O = 7-epi-ent-eudesmane-5,11-diol + diphosphate. It participates in secondary metabolite biosynthesis; terpenoid biosynthesis. Functionally, component of the volatile terpenes biosynthesis pathways. Dihydroxylated sesquiterpenoid synthase that generates dually hydroxylated products directly from (E,E)-farnesyl diphosphate, primarily eudesmane-2,11-diol, along with two closely related structural isomers. The sequence is that of Eudesmanediol synthase from Zea mays (Maize).